A 125-amino-acid chain; its full sequence is Photoactive yellow protein (125 aa).

Residues 23-86 enclose the PAS domain; sequence IDDLAFGAIQ…GRFREGVANG (64 aa). Position 69 is an S-(4-hydroxycinnamyl)cysteine (cysteine 69).

Belongs to the photoactive yellow protein family. Post-translationally, the 4-hydroxycinnamic acid (p-coumaric acid) chromophore is covalently bound via a thioester linkage.

Functionally, this photoactive protein is a photoreceptor with kinetics similar to that of rhodopsin. The chain is Photoactive yellow protein (pyp) from Rhodothalassium salexigens (Rhodospirillum salexigens).